We begin with the raw amino-acid sequence, 398 residues long: uncharacterized protein (398 aa).

A run of 6 helical transmembrane segments spans residues 37 to 57 (LVILTIVAFFWGLLGVIFVQF), 92 to 112 (IFNAIFWLTQILFNVPFFIFG), 122 to 142 (LLTLYFVAVSNLFGFFFSYIP), 186 to 206 (LFYGLIWGFLQAVFYSVILII), 228 to 248 (IGGILMLINTVSFIIGYVIGT), and 268 to 288 (FGVAFFLSPNLVFTLLMNIVL).

The protein resides in the cell membrane. This is an uncharacterized protein from Mycoplasma genitalium (strain ATCC 33530 / DSM 19775 / NCTC 10195 / G37) (Mycoplasmoides genitalium).